Here is a 204-residue protein sequence, read N- to C-terminus: Large ribosomal subunit protein eL15 (204 aa).

A lipid anchor (N-myristoyl glycine) is attached at glycine 2. Serine 34 carries the phosphoserine modification. Lysine 83 participates in a covalent cross-link: Glycyl lysine isopeptide (Lys-Gly) (interchain with G-Cter in SUMO2). A phosphoserine mark is found at serine 97 and serine 100. The segment at threonine 165–glycine 186 is disordered. Over residues arginine 169–histidine 182 the composition is skewed to basic residues.

It belongs to the eukaryotic ribosomal protein eL15 family. As to quaternary structure, component of the large ribosomal subunit. Interacts with IFIT1 (via TPR repeats 1-4).

The protein resides in the cytoplasm. Functionally, component of the large ribosomal subunit. The ribosome is a large ribonucleoprotein complex responsible for the synthesis of proteins in the cell. This is Large ribosomal subunit protein eL15 (RPL15) from Bos taurus (Bovine).